The following is a 436-amino-acid chain: Acetyl-CoA decarbonylase/synthase complex subunit delta (436 aa).

This sequence belongs to the CdhD family. As to quaternary structure, heterodimer of delta and gamma chains. The ACDS complex is made up of alpha, epsilon, beta, gamma and delta chains with a probable stoichiometry of (alpha(2)epsilon(2))(4)-beta(8)-(gamma(1)delta(1))(8).

It functions in the pathway one-carbon metabolism; methanogenesis from acetate. Part of a complex that catalyzes the reversible cleavage of acetyl-CoA, allowing growth on acetate as sole source of carbon and energy. Probably maintains the overall quaternary structure of the ACDS complex. This Methanosarcina mazei (strain ATCC BAA-159 / DSM 3647 / Goe1 / Go1 / JCM 11833 / OCM 88) (Methanosarcina frisia) protein is Acetyl-CoA decarbonylase/synthase complex subunit delta.